The sequence spans 81 residues: ATP synthase subunit c, chloroplastic (81 aa).

The next 2 helical transmembrane spans lie at 3 to 23 and 57 to 77; these read PLIP…ASIG and LAFM…LLFA.

It belongs to the ATPase C chain family. F-type ATPases have 2 components, F(1) - the catalytic core - and F(0) - the membrane proton channel. F(1) has five subunits: alpha(3), beta(3), gamma(1), delta(1), epsilon(1). F(0) has four main subunits: a(1), b(1), b'(1) and c(10-14). The alpha and beta chains form an alternating ring which encloses part of the gamma chain. F(1) is attached to F(0) by a central stalk formed by the gamma and epsilon chains, while a peripheral stalk is formed by the delta, b and b' chains.

Its subcellular location is the plastid. It is found in the chloroplast thylakoid membrane. Functionally, f(1)F(0) ATP synthase produces ATP from ADP in the presence of a proton or sodium gradient. F-type ATPases consist of two structural domains, F(1) containing the extramembraneous catalytic core and F(0) containing the membrane proton channel, linked together by a central stalk and a peripheral stalk. During catalysis, ATP synthesis in the catalytic domain of F(1) is coupled via a rotary mechanism of the central stalk subunits to proton translocation. In terms of biological role, key component of the F(0) channel; it plays a direct role in translocation across the membrane. A homomeric c-ring of between 10-14 subunits forms the central stalk rotor element with the F(1) delta and epsilon subunits. The protein is ATP synthase subunit c, chloroplastic of Cycas taitungensis (Prince sago).